The sequence spans 340 residues: MATGGYRTSSGLGGSTTDFLEEWKAKREKMRAKQNPPGPAPPGGGSSDAAGKPPAGALGTPAAAAANELNNNLPGGAPAAPAVPGPGGVNCAVGSAMLTRAAPGPRRSEDEPPAASASAAPPPQRDEEEPDGVPEKGKSSGPSARKGKGQIEKRKLREKRRSTGVVNIPAAECLDEYEDDEAGQKERKREDAITQQNTIQNEAVNLLDPGSSYLLQEPPRTVSGRYKSTTSVSEEDVSSRYSRTDRSGFPRYNRDANVSGTLVSSSTLEKKIEDLEKEVVRERQENLRLVRLMQDKEEMIGKLKEEIDLLNRDLDDIEDENEQLKQENKTLLKVVGQLTR.

A compositionally biased stretch (polar residues) spans methionine 1 to aspartate 18. The disordered stretch occupies residues methionine 1–asparagine 253. Residues serine 47–alanine 82 show a composition bias toward low complexity. Residues glutamate 68–asparagine 72 carry the B30.2/SPRY domain-binding motif motif. The residue at position 108 (serine 108) is a Phosphoserine. The Nuclear localization signal motif lies at arginine 145–arginine 161. The selective for apoptosis induction in cancer cells (SAC) stretch occupies residues arginine 145–alanine 203. Threonine 163 bears the Phosphothreonine; by PKA mark. The segment covering alanine 182 to alanine 192 has biased composition (basic and acidic residues). Residues glutamate 186–leucine 206 are a coiled coil. Residues isoleucine 193–alanine 203 show a composition bias toward polar residues. The residue at position 231 (serine 231) is a Phosphoserine. Residues serine 242–asparagine 253 are compositionally biased toward basic and acidic residues. Residues isoleucine 300–arginine 340 are leucine-zipper.

Homooligomer. Interacts (via the C-terminal region) with WT1. Interacts with THAP1. Interacts with AATF. Interacts with BACE1. Interacts with SPSB1 (via B30.2/SPRY domain); this interaction is direct and occurs in association with the Elongin BC complex. Interacts with SPSB2 (via B30.2/SPRY domain); this interaction occurs in association with the Elongin BC complex. Interacts with SPSB4 (via B30.2/SPRY domain); this interaction occurs in association with the Elongin BC complex. Component of a ternary complex composed of SQSTM1 and PRKCZ. Interacts with actin. In terms of processing, preferentially phosphorylated at the Thr-163 by PKC in cancer cells. Widely expressed. Expression is elevated in various neurodegenerative diseases such as amyotrophic lateral sclerosis, Alzheimer, Parkinson and Huntington diseases and stroke. Down-regulated in several cancers.

The protein localises to the cytoplasm. It localises to the nucleus. In terms of biological role, pro-apoptotic protein capable of selectively inducing apoptosis in cancer cells, sensitizing the cells to diverse apoptotic stimuli and causing regression of tumors in animal models. Induces apoptosis in certain cancer cells by activation of the Fas prodeath pathway and coparallel inhibition of NF-kappa-B transcriptional activity. Inhibits the transcriptional activation and augments the transcriptional repression mediated by WT1. Down-regulates the anti-apoptotic protein BCL2 via its interaction with WT1. Also seems to be a transcriptional repressor by itself. May be directly involved in regulating the amyloid precursor protein (APP) cleavage activity of BACE1. This Homo sapiens (Human) protein is PRKC apoptosis WT1 regulator protein (PAWR).